We begin with the raw amino-acid sequence, 99 residues long: Small ribosomal subunit protein uS14c (99 aa).

Belongs to the universal ribosomal protein uS14 family. As to quaternary structure, part of the 30S ribosomal subunit.

Its subcellular location is the plastid. The protein resides in the chloroplast. Binds 16S rRNA, required for the assembly of 30S particles. This Welwitschia mirabilis (Tree tumbo) protein is Small ribosomal subunit protein uS14c.